We begin with the raw amino-acid sequence, 513 residues long: Histidine ammonia-lyase (513 aa).

The 5-imidazolinone (Ala-Gly) cross-link spans 142-144 (ASG). Ser-143 carries the post-translational modification 2,3-didehydroalanine (Ser).

This sequence belongs to the PAL/histidase family. Contains an active site 4-methylidene-imidazol-5-one (MIO), which is formed autocatalytically by cyclization and dehydration of residues Ala-Ser-Gly.

The protein resides in the cytoplasm. The catalysed reaction is L-histidine = trans-urocanate + NH4(+). It functions in the pathway amino-acid degradation; L-histidine degradation into L-glutamate; N-formimidoyl-L-glutamate from L-histidine: step 1/3. This chain is Histidine ammonia-lyase, found in Hyphomonas neptunium (strain ATCC 15444).